The sequence spans 351 residues: Protein FAM118B (351 aa).

An N-acetylalanine modification is found at Ala2. Ser9 carries the post-translational modification Phosphoserine.

This sequence belongs to the FAM118 family.

It is found in the nucleus. It localises to the cajal body. Functionally, may play a role in Cajal bodies formation. The sequence is that of Protein FAM118B (FAM118B) from Bos taurus (Bovine).